The primary structure comprises 125 residues: Immunoglobulin heavy variable 4-39 (125 aa).

The signal sequence occupies residues methionine 1–serine 26. The tract at residues glutamine 27–serine 51 is framework-1. In terms of domain architecture, Ig-like spans glutamine 27–arginine 125. Cysteines 48 and 123 form a disulfide. A complementarity-determining-1 region spans residues glycine 52–tyrosine 61. The framework-2 stretch occupies residues tryptophan 62–serine 78. A complementarity-determining-2 region spans residues isoleucine 79–threonine 85. The framework-3 stretch occupies residues tyrosine 86–cysteine 123. The segment at alanine 124–arginine 125 is complementarity-determining-3.

In terms of assembly, immunoglobulins are composed of two identical heavy chains and two identical light chains; disulfide-linked.

The protein resides in the secreted. It is found in the cell membrane. In terms of biological role, v region of the variable domain of immunoglobulin heavy chains that participates in the antigen recognition. Immunoglobulins, also known as antibodies, are membrane-bound or secreted glycoproteins produced by B lymphocytes. In the recognition phase of humoral immunity, the membrane-bound immunoglobulins serve as receptors which, upon binding of a specific antigen, trigger the clonal expansion and differentiation of B lymphocytes into immunoglobulins-secreting plasma cells. Secreted immunoglobulins mediate the effector phase of humoral immunity, which results in the elimination of bound antigens. The antigen binding site is formed by the variable domain of one heavy chain, together with that of its associated light chain. Thus, each immunoglobulin has two antigen binding sites with remarkable affinity for a particular antigen. The variable domains are assembled by a process called V-(D)-J rearrangement and can then be subjected to somatic hypermutations which, after exposure to antigen and selection, allow affinity maturation for a particular antigen. This chain is Immunoglobulin heavy variable 4-39, found in Homo sapiens (Human).